The sequence spans 1728 residues: U3 small nucleolar RNA-associated protein 10 (1728 aa).

7 HEAT repeats span residues 540 to 578 (DKDFQAIIPYCAVALSDPAKKVRRAAADLIAVLGSLVKE), 881 to 926 (PANH…MMPA), 986 to 1024 (FMGSSEVIPPLIDTFRRRGRNVVASTKDLLASFVTAYEH), 1191 to 1229 (LLSIAEFIKSVEALLDRPNVGLRQKVLRALELRVDSEST), 1235 to 1274 (REALLAFLPQLTAVIRESDDMSYKHTAVTCVDKISEKYGK), 1622 to 1662 (ADAT…GQAA), and 1683 to 1721 (LQALPEMLPYISELQDDDDEVVERENRRWIVEIEEKLGE).

Belongs to the HEATR1/UTP10 family. Component of the ribosomal small subunit (SSU) processome.

The protein localises to the nucleus. The protein resides in the nucleolus. In terms of biological role, involved in nucleolar processing of pre-18S ribosomal RNA. Involved in ribosome biosynthesis. The polypeptide is U3 small nucleolar RNA-associated protein 10 (Chaetomium globosum (strain ATCC 6205 / CBS 148.51 / DSM 1962 / NBRC 6347 / NRRL 1970) (Soil fungus)).